The chain runs to 175 residues: Bifunctional protein PyrR (175 aa).

The short motif at 97–109 (IVLIDDVLFTGRT) is the PRPP-binding element.

This sequence belongs to the purine/pyrimidine phosphoribosyltransferase family. PyrR subfamily. As to quaternary structure, homodimer and homohexamer; in equilibrium.

The catalysed reaction is UMP + diphosphate = 5-phospho-alpha-D-ribose 1-diphosphate + uracil. In terms of biological role, regulates transcriptional attenuation of the pyrimidine nucleotide (pyr) operon by binding in a uridine-dependent manner to specific sites on pyr mRNA. This disrupts an antiterminator hairpin in the RNA and favors formation of a downstream transcription terminator, leading to a reduced expression of downstream genes. Functionally, also displays a weak uracil phosphoribosyltransferase activity which is not physiologically significant. This chain is Bifunctional protein PyrR, found in Leuconostoc mesenteroides subsp. mesenteroides (strain ATCC 8293 / DSM 20343 / BCRC 11652 / CCM 1803 / JCM 6124 / NCDO 523 / NBRC 100496 / NCIMB 8023 / NCTC 12954 / NRRL B-1118 / 37Y).